We begin with the raw amino-acid sequence, 519 residues long: Chloroethene reductive dehalogenase (519 aa).

The segment at residues 1-43 (MSKFHKTISRRDFMKGLGLAGAGIGAVAASAPVFHDIDELVSS) is a signal peptide (tat-type signal). 4Fe-4S ferredoxin-type domains lie at 388 to 420 (PTPP…QEDE) and 435 to 465 (LGYR…LENA). Residues C400, C403, C406, C410, C444, C448, C451, and C455 each contribute to the [4Fe-4S] cluster site.

Belongs to the PceA family. Requires [4Fe-4S] cluster as cofactor. It depends on corrinoid as a cofactor. In terms of processing, predicted to be exported by the Tat system. The position of the signal peptide cleavage has been experimentally proven.

The protein localises to the cell membrane. The catalysed reaction is chloroethene + AH2 = ethene + chloride + A + H(+). The enzyme catalyses (Z)-1,2-dichloroethene + AH2 = chloroethene + chloride + A + H(+). It carries out the reaction 1,1-dichloroethene + AH2 = chloroethene + chloride + A + H(+). Its function is as follows. Catalyzes the reductive dechlorination of chloroethene (or vinyl chloride, VC) to ethene. Can also reduce all dichloroethene (DCE) isomers, but not tetrachloroethene (PCE) or trichloroethene (TCE), at high rates. Reduced methyl viologen can act as the artificial electron donor. This Dehalococcoides mccartyi (strain VS) protein is Chloroethene reductive dehalogenase.